We begin with the raw amino-acid sequence, 274 residues long: Dermonecrotic toxin SdSicTox-betaIIB1bi (274 aa).

Histidine 5 is a catalytic residue. Residues glutamate 25 and aspartate 27 each contribute to the Mg(2+) site. Residue histidine 41 is the Nucleophile of the active site. Cystine bridges form between cysteine 45–cysteine 51 and cysteine 47–cysteine 190. Aspartate 85 provides a ligand contact to Mg(2+).

Belongs to the arthropod phospholipase D family. Class II subfamily. The cofactor is Mg(2+). Expressed by the venom gland.

The protein resides in the secreted. The catalysed reaction is an N-(acyl)-sphingosylphosphocholine = an N-(acyl)-sphingosyl-1,3-cyclic phosphate + choline. The enzyme catalyses an N-(acyl)-sphingosylphosphoethanolamine = an N-(acyl)-sphingosyl-1,3-cyclic phosphate + ethanolamine. It carries out the reaction a 1-acyl-sn-glycero-3-phosphocholine = a 1-acyl-sn-glycero-2,3-cyclic phosphate + choline. It catalyses the reaction a 1-acyl-sn-glycero-3-phosphoethanolamine = a 1-acyl-sn-glycero-2,3-cyclic phosphate + ethanolamine. Functionally, dermonecrotic toxins cleave the phosphodiester linkage between the phosphate and headgroup of certain phospholipids (sphingolipid and lysolipid substrates), forming an alcohol (often choline) and a cyclic phosphate. This toxin acts on sphingomyelin (SM). It may also act on ceramide phosphoethanolamine (CPE), lysophosphatidylcholine (LPC) and lysophosphatidylethanolamine (LPE), but not on lysophosphatidylserine (LPS), and lysophosphatidylglycerol (LPG). It acts by transphosphatidylation, releasing exclusively cyclic phosphate products as second products. Induces dermonecrosis, hemolysis, increased vascular permeability, edema, inflammatory response, and platelet aggregation. This is Dermonecrotic toxin SdSicTox-betaIIB1bi from Sicarius cf. damarensis (strain GJB-2008) (Six-eyed sand spider).